Here is a 159-residue protein sequence, read N- to C-terminus: Protein-export protein SecB (159 aa).

It belongs to the SecB family. In terms of assembly, homotetramer, a dimer of dimers. One homotetramer interacts with 1 SecA dimer.

The protein resides in the cytoplasm. In terms of biological role, one of the proteins required for the normal export of preproteins out of the cell cytoplasm. It is a molecular chaperone that binds to a subset of precursor proteins, maintaining them in a translocation-competent state. It also specifically binds to its receptor SecA. The chain is Protein-export protein SecB from Nitrobacter winogradskyi (strain ATCC 25391 / DSM 10237 / CIP 104748 / NCIMB 11846 / Nb-255).